Reading from the N-terminus, the 421-residue chain is Ubiquitin-like modifier-activating enzyme 5 (421 aa).

Positions 89, 110, 133, 156, and 191 each coordinate ATP. The Zn(2+) site is built by cysteine 233 and cysteine 236. The active-site Glycyl thioester intermediate is the cysteine 257. Cysteine 310 and cysteine 315 together coordinate Zn(2+).

The protein belongs to the ubiquitin-activating E1 family. UBA5 subfamily.

Functionally, E1-like enzyme which activates UFM1. In Oryza sativa subsp. japonica (Rice), this protein is Ubiquitin-like modifier-activating enzyme 5.